Here is a 90-residue protein sequence, read N- to C-terminus: Probable Fe(2+)-trafficking protein (90 aa).

Belongs to the Fe(2+)-trafficking protein family.

Could be a mediator in iron transactions between iron acquisition and iron-requiring processes, such as synthesis and/or repair of Fe-S clusters in biosynthetic enzymes. The polypeptide is Probable Fe(2+)-trafficking protein (Pseudomonas entomophila (strain L48)).